Reading from the N-terminus, the 765-residue chain is Protein transport protein Sec23A (765 aa).

At threonine 2 the chain carries N-acetylthreonine. Residues cysteine 61, cysteine 66, cysteine 85, and cysteine 88 each contribute to the Zn(2+) site. Threonine 308 carries the phosphothreonine modification. A Gelsolin-like repeat occupies 632 to 718; sequence PEPVLLDSSS…EHGGSQARFL (87 aa).

The protein belongs to the SEC23/SEC24 family. SEC23 subfamily. In terms of assembly, COPII is composed of at least five proteins: the Sec23/24 complex, the Sec13/31 complex and Sar1. Interacts with SEC23IP. Interacts with HTR4. Interacts with SEC16A. Interacts with SLC6A4. Interacts (as part of the Sec23/24 complex) with SEC22B; recruits SEC22B into COPII-coated vesicles and allows the transport of this cargo from the endoplasmic reticulum to the Golgi. Interacts (via Gelsolin-like repeat) with MIA2 and MIA3; specifically involved in the transport of large cargos like the collagen COL7A1. Interacts with DDHD1. Interacts with TMEM39A. Interacts with SACM1L; this interaction is reduced in the absence of TMEM39A. Interacts with kinase FAM20C; transport of FAM20C from the endoplasmic reticulum to the Golgi is likely to be mediated by COPII vesicles. High levels in brain and fibroblasts.

The protein localises to the cytoplasmic vesicle. It localises to the COPII-coated vesicle membrane. The protein resides in the endoplasmic reticulum membrane. It is found in the cytoplasm. Its subcellular location is the cytosol. Component of the coat protein complex II (COPII) which promotes the formation of transport vesicles from the endoplasmic reticulum (ER). The coat has two main functions, the physical deformation of the endoplasmic reticulum membrane into vesicles and the selection of cargo molecules for their transport to the Golgi complex. Required for the translocation of insulin-induced glucose transporter SLC2A4/GLUT4 to the cell membrane. This chain is Protein transport protein Sec23A, found in Mus musculus (Mouse).